Here is a 423-residue protein sequence, read N- to C-terminus: Elongation factor 1-alpha (423 aa).

Positions Lys-5–Thr-211 constitute a tr-type G domain. The interval Gly-14 to Ser-21 is G1. Residue Gly-14–Ser-21 coordinates GTP. Ser-21 is a binding site for Mg(2+). A G2 region spans residues Gly-60–Asp-64. Positions Asp-81–Gly-84 are G3. Residues Asp-81–His-85 and Asn-136–Asp-139 each bind GTP. The tract at residues Asn-136–Asp-139 is G4. The segment at Ser-175–Phe-177 is G5.

The protein belongs to the TRAFAC class translation factor GTPase superfamily. Classic translation factor GTPase family. EF-Tu/EF-1A subfamily.

The protein localises to the cytoplasm. The catalysed reaction is GTP + H2O = GDP + phosphate + H(+). Functionally, GTP hydrolase that promotes the GTP-dependent binding of aminoacyl-tRNA to the A-site of ribosomes during protein biosynthesis. The chain is Elongation factor 1-alpha from Methanopyrus kandleri (strain AV19 / DSM 6324 / JCM 9639 / NBRC 100938).